A 224-amino-acid chain; its full sequence is Germin-like protein 8-4 (224 aa).

Positions 1 to 23 (MASSSSLYLLAALLALASWQAIA) are cleaved as a signal peptide. A disulfide bridge links cysteine 33 with cysteine 48. The Cupin type-1 domain occupies 70-213 (STMNKVGSNV…AFQVEKKVID (144 aa)). A glycan (N-linked (GlcNAc...) asparagine) is linked at asparagine 78. The Mn(2+) site is built by histidine 111, histidine 113, glutamate 118, and histidine 158.

It belongs to the germin family. In terms of assembly, oligomer (believed to be a pentamer but probably hexamer).

The protein resides in the secreted. The protein localises to the extracellular space. It is found in the apoplast. In terms of biological role, plays a role in broad-spectrum disease resistance. Probably has no oxalate oxidase activity even if the active site is conserved. The chain is Germin-like protein 8-4 (GER1) from Oryza sativa subsp. japonica (Rice).